We begin with the raw amino-acid sequence, 375 residues long: Succinyl-diaminopimelate desuccinylase (375 aa).

His-66 provides a ligand contact to Zn(2+). Asp-68 is an active-site residue. Asp-99 is a binding site for Zn(2+). Glu-133 (proton acceptor) is an active-site residue. Zn(2+) is bound by residues Glu-134, Glu-162, and His-348.

Belongs to the peptidase M20A family. DapE subfamily. Homodimer. The cofactor is Zn(2+). Co(2+) is required as a cofactor.

It carries out the reaction N-succinyl-(2S,6S)-2,6-diaminopimelate + H2O = (2S,6S)-2,6-diaminopimelate + succinate. Its pathway is amino-acid biosynthesis; L-lysine biosynthesis via DAP pathway; LL-2,6-diaminopimelate from (S)-tetrahydrodipicolinate (succinylase route): step 3/3. Catalyzes the hydrolysis of N-succinyl-L,L-diaminopimelic acid (SDAP), forming succinate and LL-2,6-diaminopimelate (DAP), an intermediate involved in the bacterial biosynthesis of lysine and meso-diaminopimelic acid, an essential component of bacterial cell walls. This chain is Succinyl-diaminopimelate desuccinylase, found in Methylobacillus flagellatus (strain ATCC 51484 / DSM 6875 / VKM B-1610 / KT).